The primary structure comprises 62 residues: Large ribosomal subunit protein uL30 (62 aa).

It belongs to the universal ribosomal protein uL30 family. As to quaternary structure, part of the 50S ribosomal subunit.

In Beutenbergia cavernae (strain ATCC BAA-8 / DSM 12333 / CCUG 43141 / JCM 11478 / NBRC 16432 / NCIMB 13614 / HKI 0122), this protein is Large ribosomal subunit protein uL30.